The primary structure comprises 195 residues: NADH-quinone oxidoreductase subunit C (195 aa).

The protein belongs to the complex I 30 kDa subunit family. As to quaternary structure, NDH-1 is composed of 14 different subunits. Subunits NuoB, C, D, E, F, and G constitute the peripheral sector of the complex.

Its subcellular location is the cell inner membrane. The catalysed reaction is a quinone + NADH + 5 H(+)(in) = a quinol + NAD(+) + 4 H(+)(out). In terms of biological role, NDH-1 shuttles electrons from NADH, via FMN and iron-sulfur (Fe-S) centers, to quinones in the respiratory chain. The immediate electron acceptor for the enzyme in this species is believed to be ubiquinone. Couples the redox reaction to proton translocation (for every two electrons transferred, four hydrogen ions are translocated across the cytoplasmic membrane), and thus conserves the redox energy in a proton gradient. The protein is NADH-quinone oxidoreductase subunit C of Laribacter hongkongensis (strain HLHK9).